Reading from the N-terminus, the 273-residue chain is NAD kinase (273 aa).

Asp53 (proton acceptor) is an active-site residue. NAD(+) is bound by residues 53–54, Arg58, 128–129, Asp157, 168–173, and Ala192; these read DG, NE, and TAYNFS.

It belongs to the NAD kinase family. Requires a divalent metal cation as cofactor.

It localises to the cytoplasm. The catalysed reaction is NAD(+) + ATP = ADP + NADP(+) + H(+). Its function is as follows. Involved in the regulation of the intracellular balance of NAD and NADP, and is a key enzyme in the biosynthesis of NADP. Catalyzes specifically the phosphorylation on 2'-hydroxyl of the adenosine moiety of NAD to yield NADP. This chain is NAD kinase, found in Finegoldia magna (strain ATCC 29328 / DSM 20472 / WAL 2508) (Peptostreptococcus magnus).